Reading from the N-terminus, the 412-residue chain is MGKQQETILIIGAGIAGLTTSRLLTNNGIPNVVFEASTPDRSQGFAISLQEFGYSALLAALGDLPFSSLIRGVAPDRQIGGSGWIDQALRDNRTGEVLVAPDLTTAKQTIVRANRNALRHWIADCGEDELDVRYGHKLQRIEGRLGDVTAVFENNARYKGSLIIAADGVNSTVRSQILPNVVPETIPLIHYHGEFQLPHSAFDELIRPHSRQSNILVGVGDRFNTPLSICNITKSQVHLDWSYSRTVKGENDILYRPNVPSEEAKQIPPALLEELDTLCLAEPWKSFLNSESVKTHRVFHWTTRCVYITQDDARHAGEQGVVFVGDSWHAMPIFGGEGGNHALLDGVELADAIITSTSNSGKGSWDNVVKNYYGGAWKRSQDAVRRSTQRFFLLHRPATEWKEISEKKKQIA.

A signal peptide spans 1–21; it reads MGKQQETILIIGAGIAGLTTS. FAD contacts are provided by Glu35 and Ala46. The N-linked (GlcNAc...) asparagine glycan is linked to Asn92. Arg119 serves as a coordination point for FAD. 2 N-linked (GlcNAc...) asparagine glycosylation sites follow: Asn170 and Asn231. FAD-binding residues include Asp326 and Gly339.

The protein belongs to the paxM FAD-dependent monooxygenase family. It depends on FAD as a cofactor.

Its pathway is secondary metabolite biosynthesis. Functionally, FAD-dependent monooxygenase; part of the gene cluster that mediates the biosynthesis of neosartoricin B, a prenylated anthracenone that probably exhibits T-cell antiproliferative activity, suggestive of a physiological role as an immunosuppressive agent. The non-reducing polyketide synthase nscA probably synthesizes and cyclizes the decaketide backbone. The hydrolase nscB then mediates the product release through hydrolysis followed by spontaneous decarboxylation. The prenyltransferase nscD catalyzes the addition of the dimethylallyl group to the aromatic C5. The FAD-dependent monooxygenase nscC is then responsible for the stereospecific hydroxylation at C2. Neosartoricin B can be converted into two additional compounds neosartoricins C and D. Neosartoricin C is a spirocyclic compound that is cyclized through the attack of C3 hydroxyl on C14, followed by dehydration. On the other hand, neosartoricin D is a further cyclized compound in which attack of C2 on C14 in neosartoricin C results in the formation of the acetal-containing dioxabicyclo-octanone ring. Both of these compounds are novel and possibly represent related metabolites of the gene cluster. The chain is FAD-dependent monooxygenase nscC from Arthroderma benhamiae (strain ATCC MYA-4681 / CBS 112371) (Trichophyton mentagrophytes).